A 196-amino-acid chain; its full sequence is Lipoprotein signal peptidase (196 aa).

Transmembrane regions (helical) follow at residues 43 to 63 (LMLK…GISF), 75 to 95 (AIFL…MICS), and 97 to 117 (TIGS…NLID). Catalysis depends on residues Asp-126 and Asp-144. Residues 135-155 (YSFPVFNLADCFITLGVIILI) form a helical membrane-spanning segment.

Belongs to the peptidase A8 family.

It is found in the cell inner membrane. It catalyses the reaction Release of signal peptides from bacterial membrane prolipoproteins. Hydrolyzes -Xaa-Yaa-Zaa-|-(S,diacylglyceryl)Cys-, in which Xaa is hydrophobic (preferably Leu), and Yaa (Ala or Ser) and Zaa (Gly or Ala) have small, neutral side chains.. Its pathway is protein modification; lipoprotein biosynthesis (signal peptide cleavage). This protein specifically catalyzes the removal of signal peptides from prolipoproteins. The polypeptide is Lipoprotein signal peptidase (Rickettsia typhi (strain ATCC VR-144 / Wilmington)).